The primary structure comprises 225 residues: Prolactin (225 aa).

Residues Met1–Pro28 form the signal peptide. The cysteines at positions 32 and 37 are disulfide-linked. Phosphoserine is present on residues Ser52 and Ser116. 2 cysteine pairs are disulfide-bonded: Cys84–Cys200 and Cys217–Cys225.

Belongs to the somatotropin/prolactin family. As to quaternary structure, interacts with PRLR.

Its subcellular location is the secreted. Prolactin acts primarily on the mammary gland by promoting lactation. The chain is Prolactin (PRL) from Alexandromys montebelli (Japanese grass vole).